Reading from the N-terminus, the 179-residue chain is Transmembrane protein 196 (179 aa).

The next 4 membrane-spanning stretches (helical) occupy residues 11–31 (LLVL…VGAV), 44–61 (LGDS…ILCA), 67–87 (LVMI…ILNF), and 100–120 (LYPL…GCTL).

The protein localises to the cytoplasm. It localises to the membrane. Its function is as follows. Acts as a tumor suppressor in lung cancer. Inhibits tumor cell growth by inhibiting cell proliferation and migration and promoting cell apoptosis. Inhibits metastasis of lung cancer by suppressing beta-catenin expression in the Wnt/beta-catenin signaling pathway. The chain is Transmembrane protein 196 (TMEM196) from Pongo abelii (Sumatran orangutan).